A 66-amino-acid chain; its full sequence is UPF0370 protein YpfN (66 aa).

Residues 4–24 (LAKYWWILVLVFLVGVLLNVI) traverse the membrane as a helical segment. The interval 39-66 (KPELPPHRDFNDKWDDEDDWPKKDQSKK) is disordered. A compositionally biased stretch (basic and acidic residues) spans 42–51 (LPPHRDFNDK).

The protein belongs to the UPF0370 family.

Its subcellular location is the cell membrane. The sequence is that of UPF0370 protein YpfN from Salmonella arizonae (strain ATCC BAA-731 / CDC346-86 / RSK2980).